The sequence spans 640 residues: Protein SPT10 (640 aa).

Positions 1–30 (MLNQHTSSVPDDEHLQMAHQNSSSEVRNEA) are disordered. Positions 121-259 (LDYSMDTEAD…AGILKGFDVP (139 aa)) constitute an N-acetyltransferase domain. The disordered stretch occupies residues 534–565 (PHLTNNESQDHANPVNRDERDMNHSVPDLDRN). Residues 549–565 (NRDERDMNHSVPDLDRN) are compositionally biased toward basic and acidic residues.

Functionally, required for normal transcription at a number of loci in yeast. Affects transcription at Ty1 elements, at PHO5, STE6 and ADH2. The polypeptide is Protein SPT10 (SPT10) (Saccharomyces cerevisiae (strain ATCC 204508 / S288c) (Baker's yeast)).